Here is a 98-residue protein sequence, read N- to C-terminus: Large ribosomal subunit protein uL23 (98 aa).

It belongs to the universal ribosomal protein uL23 family. In terms of assembly, part of the 50S ribosomal subunit. Contacts protein L29, and trigger factor when it is bound to the ribosome.

Its function is as follows. One of the early assembly proteins it binds 23S rRNA. One of the proteins that surrounds the polypeptide exit tunnel on the outside of the ribosome. Forms the main docking site for trigger factor binding to the ribosome. This chain is Large ribosomal subunit protein uL23, found in Borrelia garinii subsp. bavariensis (strain ATCC BAA-2496 / DSM 23469 / PBi) (Borreliella bavariensis).